The chain runs to 307 residues: Putative lipid kinase SE_0507 (307 aa).

The DAGKc domain occupies 3 to 139; sequence QPYNHGVLFY…YDVLKVNDLY (137 aa). Residues serine 44, 74 to 80, and threonine 101 contribute to the ATP site; that span reads GDGTLNE. 3 residues coordinate Mg(2+): serine 220, aspartate 223, and arginine 225. The Proton acceptor role is filled by glutamate 281.

Belongs to the diacylglycerol/lipid kinase family. It depends on Mg(2+) as a cofactor.

In terms of biological role, may catalyze the ATP-dependent phosphorylation of lipids other than diacylglycerol (DAG). The sequence is that of Putative lipid kinase SE_0507 from Staphylococcus epidermidis (strain ATCC 12228 / FDA PCI 1200).